A 401-amino-acid polypeptide reads, in one-letter code: MQSYLGKLIQHEAAGGVLLVIAAAIAMVLANSPAYDFYNGLLEIPVSIRFGAFEIAKPLLLWVNDGLMAIFFFLVGLEVKREVLGGQLSSVSQITLPAVAAIAGIVFPALIYVWFNIDDPVAVNGWAIPSATDIAFAVGVFTIFGKFLPLSLKLFLLSVAIFDDIGAIVIIALFYSQDLSTTSLIVACAGFVALFLLNRFNVRRQAAYVLIGVVVWAAVLKSGVHATLAGFALAWFIPLKLKNEDGHPMLPHLEHKLHPWVGFVVLPIFAFANAGVSLFGASISDLLNPITLGIAVGLFVGKQLGIFGVCWITVKTGLAKLPDGSTWVQLYGVSLLCGIGFTMSLFIGSLAFEEQGLAYQTSVKAGVLLGSLVSAVLGAVLLARSNAKSKERAEREAARDA.

A run of 11 helical transmembrane segments spans residues alanine 13–proline 33, leucine 59–valine 79, isoleucine 94–tryptophan 114, glycine 125–glycine 145, leucine 154–phenylalanine 174, aspartate 178–asparagine 198, valine 209–alanine 229, tryptophan 260–glycine 280, leucine 292–isoleucine 312, glycine 332–phenylalanine 352, and valine 363–alanine 383.

The protein belongs to the NhaA Na(+)/H(+) (TC 2.A.33) antiporter family.

The protein resides in the cell inner membrane. It carries out the reaction Na(+)(in) + 2 H(+)(out) = Na(+)(out) + 2 H(+)(in). Na(+)/H(+) antiporter that extrudes sodium in exchange for external protons. This chain is Na(+)/H(+) antiporter NhaA 2, found in Pseudoalteromonas atlantica (strain T6c / ATCC BAA-1087).